Consider the following 297-residue polypeptide: N-acetylneuraminate lyase (297 aa).

Residues serine 47 and threonine 48 each coordinate aceneuramate. Tyrosine 137 acts as the Proton donor in catalysis. The active-site Schiff-base intermediate with substrate is the lysine 165. Threonine 167, glycine 189, aspartate 191, glutamate 192, and serine 208 together coordinate aceneuramate.

Belongs to the DapA family. NanA subfamily. In terms of assembly, homotetramer.

It is found in the cytoplasm. It catalyses the reaction aceneuramate = aldehydo-N-acetyl-D-mannosamine + pyruvate. Its pathway is amino-sugar metabolism; N-acetylneuraminate degradation; D-fructose 6-phosphate from N-acetylneuraminate: step 1/5. Catalyzes the reversible aldol cleavage of N-acetylneuraminic acid (sialic acid; Neu5Ac) to form pyruvate and N-acetylmannosamine (ManNAc) via a Schiff base intermediate. The sequence is that of N-acetylneuraminate lyase from Escherichia fergusonii (strain ATCC 35469 / DSM 13698 / CCUG 18766 / IAM 14443 / JCM 21226 / LMG 7866 / NBRC 102419 / NCTC 12128 / CDC 0568-73).